Reading from the N-terminus, the 331-residue chain is tRNA (guanine-N(1)-)-methyltransferase (331 aa).

Low complexity-rich tracts occupy residues 77 to 99 (GSDT…QATR) and 107 to 134 (AQPG…GRAA). The disordered stretch occupies residues 77 to 137 (GSDTTARSGS…PGAGRAASSR (61 aa)). S-adenosyl-L-methionine contacts are provided by residues glycine 169 and 193 to 198 (LGDYVL). A disordered region spans residues 312–331 (WQRCSPAPSEQAPEGARDMA).

It belongs to the RNA methyltransferase TrmD family. As to quaternary structure, homodimer.

Its subcellular location is the cytoplasm. It carries out the reaction guanosine(37) in tRNA + S-adenosyl-L-methionine = N(1)-methylguanosine(37) in tRNA + S-adenosyl-L-homocysteine + H(+). Functionally, specifically methylates guanosine-37 in various tRNAs. The chain is tRNA (guanine-N(1)-)-methyltransferase from Kocuria rhizophila (strain ATCC 9341 / DSM 348 / NBRC 103217 / DC2201).